Consider the following 482-residue polypeptide: MEGLCLNSFTRVLLLLFVFLVFSHKWQRVNAVEPVLELVKGFEAKPDSSIDSFQPLLTDSNGNFSFGFLRVNGSRLSLAVTHPNLTDPLWVLDPTRSASWSHKTKLFFNGSLVIIDPSSRLEWSTHTNGDRLILRNDSNLQVVKTSTFVEWESFDFPGNTLVESQNFTSAMALVSPNGLYSMRLGSDFIGLYAKVSEESQQFYWKHSALQAKAKVKDGAGPILARINPNGYLGMYQTGSIPIDVEAFNSFQRPVNGLLILRLESDGNLRGYLWDGSHWALNYEAIRETCDLPNPCGPYSLCTPGSGCSCIDNRTVIGECTHAASSPADFCDKTTEFKVVRRDGVEVPFKELMDHKTTSSLGECEEMCVDNCKCFGAVYNNGSGFCYLVNYPIRTMLGVADPSKLGYFKVREGVGKKKSRVGLTVGMSLLAVIALVLMVAMVYVGFRNWRREKRVLEEDNGLSPGPYKNLGSDSFNSVEMSRR.

An N-terminal signal peptide occupies residues 1–31; the sequence is MEGLCLNSFTRVLLLLFVFLVFSHKWQRVNA. One can recognise a PAN domain in the interval 330-411; the sequence is CDKTTEFKVV…SKLGYFKVRE (82 aa). Cystine bridges form between Cys363-Cys385 and Cys367-Cys373. A helical membrane pass occupies residues 425-445; the sequence is GMSLLAVIALVLMVAMVYVGF.

It localises to the membrane. This is PAN domain-containing protein At5g03700 from Arabidopsis thaliana (Mouse-ear cress).